The primary structure comprises 673 residues: MNLLPKTREEFAQTDYWNEFFKKRGEKAFEWYGEYLELCDQIHKYIKPADRILMLGCGNSKLSMDMYDTGFRDITNIDISPIAVKKMLELNAKSRPEMKFLQMDATAMTFPDESFSVSLDKGTLDALFADDEPETRAVVENYFKEILRTMRNGGRYVGISLLQEHILNFLLDFLPKHNCMLRIVHCLGVEQANKEKNADDALTLPVFVVVATKFKSLPMPVLEFGFGNDKMQRFTTVSELNSAVSSVQKAALVCNGLARSNIAGHNEVIMDLHRPSEQTPRYTIHILDKPPARGLGKYAAFIVPQGREVEWIFSTPAGRKKLQDSANFQRLAVVTLHRDQVYSTLDEVKQELADSIKNLSPAGLTDQIPYLSLGSDVGKRETLICGFSKISGDFRIEEVEANGKTLRRLIFLSNQFVVQSEALVKTVKIKGKKDRKKIDFGYLACQHHLYMSVGVQLATTVQHPKRDVEKDVLVVGLGGGGLCSFLHAALPQARITAVEIDPIMLEVAEQYFELKQDKRFHVVIDDGLDFVERCRNEDIHFDAVLFDVDSKDLSLGMSCPPQSFLATKILQHIKEIIGPKGLFMLNLVCRDESLRTEALNNLHKVFPAVCSYKLEEDINEIIYCANDEKYKTVEQWKKNMGTAGRGLNSAVKETKLASEDALEVAEFLSELKI.

It belongs to the methyltransferase superfamily.

It carries out the reaction L-lysyl-[protein] + S-adenosyl-L-methionine = N(6)-methyl-L-lysyl-[protein] + S-adenosyl-L-homocysteine + H(+). It catalyses the reaction N(6)-methyl-L-lysyl-[protein] + S-adenosyl-L-methionine = N(6),N(6)-dimethyl-L-lysyl-[protein] + S-adenosyl-L-homocysteine + H(+). The catalysed reaction is N-terminal glycyl-L-lysyl-L-glutamyl-[protein] + 3 S-adenosyl-L-methionine = N-terminal N,N,N-trimethyl-glycyl-L-lysyl-L-glutamyl-[protein] + 3 S-adenosyl-L-homocysteine + 3 H(+). Functionally, dual methyltransferase. It catalyzes N-terminal methylation of target proteins via its C-terminus. It catalyzes dimethylation on lysine residues of target proteins via its N-terminus. This chain is eEF1A lysine and N-terminal methyltransferase homolog, found in Drosophila melanogaster (Fruit fly).